The primary structure comprises 367 residues: Glutamate 5-kinase (367 aa).

Lys10 is a binding site for ATP. Ser50, Asp137, and Asn149 together coordinate substrate. Residues 169 to 170 and 211 to 217 contribute to the ATP site; these read TD and TGGMSTK. Residues 275-353 enclose the PUA domain; sequence AGEITVDDGA…QQIAEILGYE (79 aa).

Belongs to the glutamate 5-kinase family.

The protein localises to the cytoplasm. The catalysed reaction is L-glutamate + ATP = L-glutamyl 5-phosphate + ADP. The protein operates within amino-acid biosynthesis; L-proline biosynthesis; L-glutamate 5-semialdehyde from L-glutamate: step 1/2. Its function is as follows. Catalyzes the transfer of a phosphate group to glutamate to form L-glutamate 5-phosphate. This Pectobacterium atrosepticum (strain SCRI 1043 / ATCC BAA-672) (Erwinia carotovora subsp. atroseptica) protein is Glutamate 5-kinase.